The following is a 500-amino-acid chain: Glucokinase-1 (500 aa).

Position 2 is an N-acetylserine (Ser-2). Position 2 is a phosphoserine (Ser-2). The Hexokinase domain occupies 12–498 (RAVIQAVDQI…SGVGAALCAL (487 aa)). A hexokinase small subdomain region spans residues 74–216 (NGTERGVLLA…MPMIKVVALT (143 aa)). Lys-110 contributes to the ATP binding site. Residues 158–184 (KLGFTFSYPVDQTSLNSGTLIRWTKGF) are glucose-binding. The segment at 217–487 (NDTVGTYLSH…RKVHLKIAKD (271 aa)) is hexokinase large subdomain. Phosphoserine is present on Ser-470. 487 to 492 (DGSGVG) lines the ATP pocket.

This sequence belongs to the hexokinase family. As to quaternary structure, monomer.

It catalyses the reaction D-glucose + ATP = D-glucose 6-phosphate + ADP + H(+). It participates in carbohydrate metabolism; hexose metabolism. It functions in the pathway carbohydrate degradation; glycolysis; D-glyceraldehyde 3-phosphate and glycerone phosphate from D-glucose: step 1/4. In terms of biological role, two isoenzymes, hexokinase-1 and hexokinase-2, can phosphorylate keto- and aldohexoses in yeast, whereas a third isoenzyme, GLK, is specific for aldohexoses. All glucose phosphorylating enzymes are involved in glucose uptake. In Saccharomyces cerevisiae (strain ATCC 204508 / S288c) (Baker's yeast), this protein is Glucokinase-1 (GLK1).